The following is a 113-amino-acid chain: Large ribosomal subunit protein bL17 (113 aa).

Belongs to the bacterial ribosomal protein bL17 family. Part of the 50S ribosomal subunit. Contacts protein L32.

This is Large ribosomal subunit protein bL17 from Alkaliphilus metalliredigens (strain QYMF).